The sequence spans 1357 residues: DNA-directed RNA polymerase subunit beta (1357 aa).

The protein belongs to the RNA polymerase beta chain family. The RNAP catalytic core consists of 2 alpha, 1 beta, 1 beta' and 1 omega subunit. When a sigma factor is associated with the core the holoenzyme is formed, which can initiate transcription.

The catalysed reaction is RNA(n) + a ribonucleoside 5'-triphosphate = RNA(n+1) + diphosphate. In terms of biological role, DNA-dependent RNA polymerase catalyzes the transcription of DNA into RNA using the four ribonucleoside triphosphates as substrates. The polypeptide is DNA-directed RNA polymerase subunit beta (Pseudomonas fluorescens (strain Pf0-1)).